We begin with the raw amino-acid sequence, 193 residues long: Peptidyl-tRNA hydrolase (193 aa).

Y16 serves as a coordination point for tRNA. Catalysis depends on H21, which acts as the Proton acceptor. TRNA is bound by residues F67, N69, and N115.

Belongs to the PTH family. Monomer.

It is found in the cytoplasm. The enzyme catalyses an N-acyl-L-alpha-aminoacyl-tRNA + H2O = an N-acyl-L-amino acid + a tRNA + H(+). Hydrolyzes ribosome-free peptidyl-tRNAs (with 1 or more amino acids incorporated), which drop off the ribosome during protein synthesis, or as a result of ribosome stalling. Functionally, catalyzes the release of premature peptidyl moieties from peptidyl-tRNA molecules trapped in stalled 50S ribosomal subunits, and thus maintains levels of free tRNAs and 50S ribosomes. This chain is Peptidyl-tRNA hydrolase, found in Baumannia cicadellinicola subsp. Homalodisca coagulata.